A 597-amino-acid chain; its full sequence is Gamma-terpinene synthase, chloroplastic (597 aa).

The transit peptide at 1 to 47 (MATLSMQVSILNKQLKNLNSFGMRASKLPLVARRVDVSTTRLRPICS) directs the protein to the chloroplast. Asp350 and Asp354 together coordinate Mn(2+). Positions 350 to 354 (DDVYD) match the DDXXD motif motif. Homodimerization stretches follow at residues 356-362 (YGTLDEL) and 428-464 (EAKW…YFTL). Mn(2+) is bound by residues Asp494 and Glu502.

Belongs to the terpene synthase family. As to quaternary structure, homodimer. Mn(2+) is required as a cofactor. The cofactor is Mg(2+).

It is found in the plastid. The protein localises to the chloroplast. The enzyme catalyses (2E)-geranyl diphosphate = gamma-terpinene + diphosphate. Its pathway is secondary metabolite biosynthesis; terpenoid biosynthesis. In terms of biological role, involved in the biosynthesis of phenolic monoterpenes natural products thymol and carvacrol which have a broad range of biological activities acting as antimicrobial compounds, insecticides, antioxidants and pharmaceutical agents. Monoterpene synthase which catalyzes the conversion of geranyl diphosphate (GPP) to gamma-terpinene and minor amounts of other monoterpenes (e.g. alpha-thujene, alpha-terpinene, myrcene, sabinene, (+)-R-limonene, alpha-pinene and alpha-phellandrene). This is Gamma-terpinene synthase, chloroplastic from Thymus caespititius (Cretan thyme).